The chain runs to 227 residues: Fibrillarin-like rRNA/tRNA 2'-O-methyltransferase (227 aa).

Residues 86–87 (TT), 105–106 (EF), 130–131 (DA), and 150–153 (DVAQ) contribute to the S-adenosyl-L-methionine site.

Belongs to the methyltransferase superfamily. Fibrillarin family. As to quaternary structure, interacts with nop5. Component of box C/D small ribonucleoprotein (sRNP) particles that contain rpl7ae, FlpA and nop5, plus a guide RNA.

Its function is as follows. Involved in pre-rRNA and tRNA processing. Utilizes the methyl donor S-adenosyl-L-methionine to catalyze the site-specific 2'-hydroxyl methylation of ribose moieties in rRNA and tRNA. Site specificity is provided by a guide RNA that base pairs with the substrate. Methylation occurs at a characteristic distance from the sequence involved in base pairing with the guide RNA. This chain is Fibrillarin-like rRNA/tRNA 2'-O-methyltransferase, found in Pyrococcus abyssi (strain GE5 / Orsay).